The primary structure comprises 337 residues: Inositol 2-dehydrogenase (337 aa).

It belongs to the Gfo/Idh/MocA family. Homotetramer.

The catalysed reaction is myo-inositol + NAD(+) = scyllo-inosose + NADH + H(+). Its function is as follows. Involved in the oxidation of myo-inositol (MI) to 2-keto-myo-inositol (2KMI or 2-inosose). The protein is Inositol 2-dehydrogenase of Burkholderia lata (strain ATCC 17760 / DSM 23089 / LMG 22485 / NCIMB 9086 / R18194 / 383).